Consider the following 1055-residue polypeptide: Elongation factor 3 (1055 aa).

Val-45 serves as a coordination point for ADP. HEAT repeat units lie at residues 45 to 86 (VEFF…NGAA), 96 to 133 (SAENTPFPALLEAFADKVAAVKTAAIAAVKAIVQSMNP), 135 to 172 (ASFVLLPALLNLIRTSGKWQIKAGSLEILQQLITSAPY), 175 to 213 (GEAMPDLVPVLAGAVWDTKSDVKKAAKATLEKAVSLVEN), 217 to 255 (EKFVPALVKSLLNPIEEVPKTISLLSATTFVSEVTAPTI), 257 to 290 (LIAPLLIRGLDERPTATKRKVCVIADNMSKLVDS), and 295 to 337 (RPFL…VPVE). ABC transporter domains lie at 447–659 (CNIE…SYYQ) and 687–1004 (LKMR…KKAG). ADP is bound by residues Asn-723, Glu-933, Asn-936, and His-962. 2 disordered regions span residues 987-1006 (HNWVEGQGSGERIDKKAGDD) and 1024-1055 (EKKLSAADKRKAKKDRMARRKRGEEVFSDEEL). Residues 1033–1044 (RKAKKDRMARRK) show a composition bias toward basic residues.

It belongs to the ABC transporter superfamily. ABCF family. EF3 subfamily. Associates with ribosomes.

The protein resides in the cytoplasm. It is found in the cytosol. It carries out the reaction ATP + H2O = ADP + phosphate + H(+). Its pathway is protein biosynthesis; polypeptide chain elongation. Functionally, ribosome-dependent ATPase that functions in cytoplasmic translation elongation. Required for the ATP-dependent release of deacylated tRNA from the ribosomal E-site during protein biosynthesis. Stimulates the eEF1A-dependent binding of aminoacyl-tRNA to the ribosomal A-site, which has reduced affinity for tRNA as long as the E-site is occupied. Assists translation termination by stimulating the release of nascent protein from the ribosome by release factors. Appears to target calcium-channel protein CCH1 to the plasma membrane. The sequence is that of Elongation factor 3 from Cryptococcus neoformans var. neoformans serotype D (strain JEC21 / ATCC MYA-565) (Filobasidiella neoformans).